We begin with the raw amino-acid sequence, 144 residues long: 3-dehydroquinate dehydratase (144 aa).

Tyrosine 22 serves as the catalytic Proton acceptor. The substrate site is built by asparagine 73, histidine 79, and aspartate 86. The Proton donor role is filled by histidine 99. Residues 100–101 and arginine 110 contribute to the substrate site; that span reads LS.

The protein belongs to the type-II 3-dehydroquinase family. In terms of assembly, homododecamer.

It carries out the reaction 3-dehydroquinate = 3-dehydroshikimate + H2O. Its pathway is metabolic intermediate biosynthesis; chorismate biosynthesis; chorismate from D-erythrose 4-phosphate and phosphoenolpyruvate: step 3/7. Catalyzes a trans-dehydration via an enolate intermediate. This is 3-dehydroquinate dehydratase from Pelotomaculum thermopropionicum (strain DSM 13744 / JCM 10971 / SI).